The following is a 334-amino-acid chain: Anthranilate phosphoribosyltransferase (334 aa).

Residues Gly-79, 82-83, Ser-87, 89-92, 107-115, and Ser-119 contribute to the 5-phospho-alpha-D-ribose 1-diphosphate site; these read GD, NIST, and KHGNRSISS. An anthranilate-binding site is contributed by Gly-79. Ser-91 provides a ligand contact to Mg(2+). Asn-110 contacts anthranilate. Residue Arg-165 participates in anthranilate binding. Residues Asp-224 and Glu-225 each coordinate Mg(2+).

It belongs to the anthranilate phosphoribosyltransferase family. In terms of assembly, homodimer. Mg(2+) is required as a cofactor.

The enzyme catalyses N-(5-phospho-beta-D-ribosyl)anthranilate + diphosphate = 5-phospho-alpha-D-ribose 1-diphosphate + anthranilate. It participates in amino-acid biosynthesis; L-tryptophan biosynthesis; L-tryptophan from chorismate: step 2/5. Its function is as follows. Catalyzes the transfer of the phosphoribosyl group of 5-phosphorylribose-1-pyrophosphate (PRPP) to anthranilate to yield N-(5'-phosphoribosyl)-anthranilate (PRA). This chain is Anthranilate phosphoribosyltransferase, found in Streptococcus sanguinis (strain SK36).